Here is a 140-residue protein sequence, read N- to C-terminus: Ribonuclease P protein component (140 aa).

A disordered region spans residues 115 to 140 (RCKPGAPKPPPFKKRPNKSVKSNKQT).

Belongs to the RnpA family. Consists of a catalytic RNA component (M1 or rnpB) and a protein subunit.

It catalyses the reaction Endonucleolytic cleavage of RNA, removing 5'-extranucleotides from tRNA precursor.. In terms of biological role, RNaseP catalyzes the removal of the 5'-leader sequence from pre-tRNA to produce the mature 5'-terminus. It can also cleave other RNA substrates such as 4.5S RNA. The protein component plays an auxiliary but essential role in vivo by binding to the 5'-leader sequence and broadening the substrate specificity of the ribozyme. The chain is Ribonuclease P protein component from Pseudoalteromonas translucida (strain TAC 125).